The sequence spans 444 residues: Phosphoglucosamine mutase (444 aa).

The Phosphoserine intermediate role is filled by S102. Residues S102, D241, D243, and D245 each contribute to the Mg(2+) site. A Phosphoserine modification is found at S102.

The protein belongs to the phosphohexose mutase family. Mg(2+) is required as a cofactor. Activated by phosphorylation.

It carries out the reaction alpha-D-glucosamine 1-phosphate = D-glucosamine 6-phosphate. Functionally, catalyzes the conversion of glucosamine-6-phosphate to glucosamine-1-phosphate. This is Phosphoglucosamine mutase from Actinobacillus pleuropneumoniae serotype 7 (strain AP76).